A 403-amino-acid polypeptide reads, in one-letter code: Ribosomal RNA large subunit methyltransferase I (403 aa).

Positions 9-88 constitute a PUA domain; the sequence is YPRLVLSKGR…ESIDIAFFTR (80 aa).

The protein belongs to the methyltransferase superfamily. RlmI family.

The protein resides in the cytoplasm. It catalyses the reaction cytidine(1962) in 23S rRNA + S-adenosyl-L-methionine = 5-methylcytidine(1962) in 23S rRNA + S-adenosyl-L-homocysteine + H(+). In terms of biological role, specifically methylates the cytosine at position 1962 (m5C1962) of 23S rRNA. The protein is Ribosomal RNA large subunit methyltransferase I of Salmonella agona (strain SL483).